The primary structure comprises 580 residues: Tyrosyl-DNA phosphodiesterase 1 (580 aa).

A disordered region spans residues 65–117 (ATNKEQEAHSSSSKPAVTAPVASGSSSSGSLDTNPSGSSASGPAASQDTSNLA). Low complexity predominate over residues 87-110 (SGSSSSGSLDTNPSGSSASGPAAS). The Nucleophile role is filled by histidine 248. A substrate-binding site is contributed by lysine 250. The interval 387–390 (SIGS) is interaction with DNA. Histidine 479 (proton donor/acceptor) is an active-site residue. Lysine 481 is a substrate binding site.

The protein belongs to the tyrosyl-DNA phosphodiesterase family. As to expression, expressed in the body and at higher levels in the head. Expressed in the delaminating neuroblasts and a few ganglion mother cells in stage 11-14 embryonic central nervous system. Weak expression is seen in gonads at stage 16. Expressed in the brain; expression is regulated by DIP2.

It localises to the nucleus. Its subcellular location is the cytoplasm. Functionally, DNA repair enzyme that can remove a variety of covalent adducts from DNA through hydrolysis of a 3'-phosphodiester bond, giving rise to DNA with a free 3' phosphate. Catalyzes the hydrolysis of dead-end complexes between DNA and the topoisomerase I active site tyrosine residue. Hydrolyzes 3'-phosphoglycolates on protruding 3' ends on DNA double-strand breaks due to DNA damage by radiation and free radicals. Acts on blunt-ended double-strand DNA breaks and on single-stranded DNA. May have low 3'exonuclease activity and may be able to remove a single nucleoside from the 3'end of DNA and RNA molecules with 3'hydroxyl groups. Has no exonuclease activity towards DNA or RNA with a 3'phosphate. Required for normal polarization of epidermal cells, correct subcellular location of the Crb complex to the apical lateral membrane, and for normal neuronal development during embryonic development. Contributes to maintenance of epithelial cells in response to topoisomerase-1-mediated and oxidative DNA damage. Required for precise axonal bifurcation in mushroom body neurons. Required for maintenance of normal neuronal function. This chain is Tyrosyl-DNA phosphodiesterase 1, found in Drosophila melanogaster (Fruit fly).